The following is a 1024-amino-acid chain: Multidrug resistance protein MdtC (1024 aa).

Transmembrane regions (helical) follow at residues 15–35, 333–353, 360–380, 387–407, 431–451, 463–483, 528–548, 853–873, 897–917, 953–973, and 984–1004; these read WLLT…LPVA, EVEQ…FAFL, LIPA…MYLC, LSLM…IVVL, VGFT…PLLL, FAIT…TLTP, WGLL…ISIP, LWLI…LYES, LFNA…IGIV, PIIM…LGSG, and ITIV…TPVV.

Belongs to the resistance-nodulation-cell division (RND) (TC 2.A.6) family. MdtC subfamily. Part of a tripartite efflux system composed of MdtA, MdtB and MdtC. MdtC forms a heteromultimer with MdtB.

The protein resides in the cell inner membrane. This Erwinia tasmaniensis (strain DSM 17950 / CFBP 7177 / CIP 109463 / NCPPB 4357 / Et1/99) protein is Multidrug resistance protein MdtC.